The primary structure comprises 312 residues: Olfactory receptor 2B8 (312 aa).

Topologically, residues 1 to 25 (MDQKNGSSFTGFILLGFSDRPQLEL) are extracellular. Asparagine 5 carries an N-linked (GlcNAc...) asparagine glycan. The chain crosses the membrane as a helical span at residues 26 to 49 (VLFVVLLIFYIFTLLGNKTIIVLS). Residues 50 to 57 (HLDPHLHT) lie on the Cytoplasmic side of the membrane. The helical transmembrane segment at 58–79 (PMYFFFSNLSFLDLCYTTGIVP) threads the bilayer. Over 80 to 100 (QLLVNLRGADKSISYGGCVVQ) the chain is Extracellular. A disulfide bridge connects residues cysteine 97 and cysteine 189. The helical transmembrane segment at 101 to 120 (LYISLGLGSTECVLLGVMVF) threads the bilayer. At 121-139 (DRYAAVCRPLHYTVVMHPC) the chain is on the cytoplasmic side. Residues 140–158 (LYVLMASTSWVIGFANSLL) traverse the membrane as a helical segment. The Extracellular portion of the chain corresponds to 159–195 (QTVLILLLTLCGRNKLEHFLCEVPPLLKLACVDTTMN). An N-linked (GlcNAc...) asparagine glycan is attached at asparagine 195. A helical membrane pass occupies residues 196-219 (ESELFFVSVIILLVPVALIIFSYS). Residues 220–236 (QIVRAVMRIKLATGQRK) are Cytoplasmic-facing. The helical transmembrane segment at 237–259 (VFGTCGSHLTVVSLFYGTAIYAY) threads the bilayer. Topologically, residues 260 to 272 (LQPGNNYSQDQGK) are extracellular. The N-linked (GlcNAc...) asparagine glycan is linked to asparagine 265. Residues 273 to 292 (FISLFYTIITPMINPLIYTL) traverse the membrane as a helical segment. Residues 293–312 (RNKDVKGALKKVLWKNYDSR) are Cytoplasmic-facing.

Belongs to the G-protein coupled receptor 1 family.

It is found in the cell membrane. Odorant receptor. The polypeptide is Olfactory receptor 2B8 (Homo sapiens (Human)).